The sequence spans 435 residues: MTILALGINHKTASVSLREKVAFVEDKRQRAFEQIRDQSLAESVVILSTCNRTELYFHQPKIPPQEEHPDNIAWREQCFNWFAEIHQLDKEELSEAYYFKQNLEAARHLMSVACGLDSLILGEPQILGQVKQAYQESEEFYHSQGSGVSTNLSRLFQKTFATAKRVRSETEIGSSAVSVAYAACGLARQIFDDFTKLRFLLVGAGETIELVARHLINHGAKNIMIANRTHIRAEMLAVKLDIPMQILSLSALQIGLNQADVVICSTGSPDILITKEMVEQAQKQRRFDPMLLIDIAVPRDIDEKAGELDSIYAYSVDDLQNIIQQNIAQRQQAAEQAKEIVIEEAKDFFVWLKQQQSTNLIKHYRQNAEEIRLDLLEKALSALQQGQDCEKVLNELSYKLTNQLLHIPTQALQAMAKNSNVKGLQSFSKALKLEE.

Residues 49 to 52 (TCNR), serine 118, 123 to 125 (EPQ), and glutamine 129 contribute to the substrate site. Cysteine 50 serves as the catalytic Nucleophile. 203-208 (GAGETI) provides a ligand contact to NADP(+).

This sequence belongs to the glutamyl-tRNA reductase family. As to quaternary structure, homodimer.

The catalysed reaction is (S)-4-amino-5-oxopentanoate + tRNA(Glu) + NADP(+) = L-glutamyl-tRNA(Glu) + NADPH + H(+). It functions in the pathway porphyrin-containing compound metabolism; protoporphyrin-IX biosynthesis; 5-aminolevulinate from L-glutamyl-tRNA(Glu): step 1/2. Catalyzes the NADPH-dependent reduction of glutamyl-tRNA(Glu) to glutamate 1-semialdehyde (GSA). The chain is Glutamyl-tRNA reductase from Glaesserella parasuis serovar 5 (strain SH0165) (Haemophilus parasuis).